Reading from the N-terminus, the 501-residue chain is Probable histidine--tRNA ligase, mitochondrial (501 aa).

The disordered stretch occupies residues Thr32–Ile54. The segment covering Asn33–Ile54 has biased composition (low complexity).

This sequence belongs to the class-II aminoacyl-tRNA synthetase family.

It localises to the mitochondrion matrix. The enzyme catalyses tRNA(His) + L-histidine + ATP = L-histidyl-tRNA(His) + AMP + diphosphate + H(+). This chain is Probable histidine--tRNA ligase, mitochondrial (mhisS), found in Dictyostelium discoideum (Social amoeba).